A 550-amino-acid chain; its full sequence is Arginine--tRNA ligase (550 aa).

Positions 130–140 (ANPTGPIHLGG) match the 'HIGH' region motif.

Belongs to the class-I aminoacyl-tRNA synthetase family. In terms of assembly, monomer.

Its subcellular location is the cytoplasm. The catalysed reaction is tRNA(Arg) + L-arginine + ATP = L-arginyl-tRNA(Arg) + AMP + diphosphate. This is Arginine--tRNA ligase from Rhodococcus erythropolis (strain PR4 / NBRC 100887).